The following is a 542-amino-acid chain: Putative ankyrin repeat protein FPV115 (542 aa).

ANK repeat units follow at residues 33 to 62, 157 to 186, 218 to 247, 251 to 281, 285 to 314, 316 to 345, 347 to 375, and 378 to 407; these read FRNL…DPNS, DGLL…KTNL, NDIN…DINT, KGKT…DINV, EGLT…DVKV, TTST…EFIT, DYLS…DVNS, and CIST…NINA.

This Fowlpox virus (strain NVSL) (FPV) protein is Putative ankyrin repeat protein FPV115.